Consider the following 308-residue polypeptide: Porphobilinogen deaminase (308 aa).

The residue at position 240 (cysteine 240) is an S-(dipyrrolylmethanemethyl)cysteine.

Belongs to the HMBS family. As to quaternary structure, monomer. Dipyrromethane serves as cofactor.

The enzyme catalyses 4 porphobilinogen + H2O = hydroxymethylbilane + 4 NH4(+). It functions in the pathway porphyrin-containing compound metabolism; protoporphyrin-IX biosynthesis; coproporphyrinogen-III from 5-aminolevulinate: step 2/4. Tetrapolymerization of the monopyrrole PBG into the hydroxymethylbilane pre-uroporphyrinogen in several discrete steps. This Campylobacter hominis (strain ATCC BAA-381 / DSM 21671 / CCUG 45161 / LMG 19568 / NCTC 13146 / CH001A) protein is Porphobilinogen deaminase.